The sequence spans 192 residues: MEFLVEKIGMSRTISVPSTPVTLLKVKDAKVCEVLGNGKALVAYAQGKDANKAIEGQQKKYNLSKEFNRFATLEVANGEAGDQDVAPLAQAVRVKVSLQTKGRGFTGVMKRWNFAGGPAAHGHRFKRRTGSIGNREWPGRVQPGKKMAGQYGNEKVTVQNEIVSFDAENKILVLKGSIPGFNGAFGRIKVVK.

Belongs to the universal ribosomal protein uL3 family. Part of the 50S ribosomal subunit. Forms a cluster with proteins L14 and L19.

One of the primary rRNA binding proteins, it binds directly near the 3'-end of the 23S rRNA, where it nucleates assembly of the 50S subunit. The polypeptide is Large ribosomal subunit protein uL3 (rplC) (Wolinella succinogenes (strain ATCC 29543 / DSM 1740 / CCUG 13145 / JCM 31913 / LMG 7466 / NCTC 11488 / FDC 602W) (Vibrio succinogenes)).